The primary structure comprises 553 residues: MSDIALTVSILALVAVVGLFIGNVKFRGIGLGIGGVLFGGIIVGHFVSQAGMTLSSDMLHVIQEFGLILFVYTIGIQVGPGFFASLRVSGLRLNLFAVLIVIIGGLVTAILHKLFDIPLPVVLGIFSGAVTNTPALGAGQQILRDLGTPMEMVDQMGMSYAMAYPFGICGILFTMWMLRVIFRVNVETEAQQHESSRTNGGALIKTINIRVENPNLHDLAIKDVPILNGDKIICSRLKREETLKVPSPDTIIQLGDLLHLVGQPADLHNAQLVIGQEVDTSLSTKGTDLRVERVVVTNENVLGKRIRDLHFKERYDVVISRLNRAGVELVASGDISLQFGDILNLVGRPSAIDAVANVLGNAQQKLQQVQMLPVFIGIGLGVLLGSIPVFVPGFPAALKLGLAGGPLIMALILGRIGSIGKLYWFMPPSANLALRELGIVLFLSVVGLKSGGDFVNTLVNGEGLSWIGYGALITAVPLITVGILARMLAKMNYLTMCGMLAGSMTDPPALAFANNLHPTSGAPALSYATVYPLVMFLRIITPQLLAVLFWSIG.

5 consecutive transmembrane segments (helical) span residues 4–24 (IALTVSILALVAVVGLFIGNV), 28–48 (GIGLGIGGVLFGGIIVGHFVS), 65–85 (FGLILFVYTIGIQVGPGFFAS), 95–115 (LFAVLIVIIGGLVTAILHKLF), and 158–178 (MSYAMAYPFGICGILFTMWML). RCK C-terminal domains lie at 191 to 276 (QQHE…VIGQ) and 279 to 361 (DTSL…VLGN). Transmembrane regions (helical) follow at residues 371–391 (MLPVFIGIGLGVLLGSIPVFV), 393–413 (GFPAALKLGLAGGPLIMALIL), 439–459 (IVLFLSVVGLKSGGDFVNTLV), 464–484 (LSWIGYGALITAVPLITVGIL), 493–513 (YLTMCGMLAGSMTDPPALAFA), and 533–553 (LVMFLRIITPQLLAVLFWSIG).

The protein belongs to the AAE transporter (TC 2.A.81) family. YidE subfamily.

Its subcellular location is the cell membrane. The chain is Putative transport protein YidE from Shigella boydii serotype 4 (strain Sb227).